A 404-amino-acid polypeptide reads, in one-letter code: Cysteine desulfurase IscS (404 aa).

Pyridoxal 5'-phosphate is bound by residues 75-76, Asn-155, Gln-183, and 203-205; these read AT and SAH. Lys-206 is modified (N6-(pyridoxal phosphate)lysine). Thr-243 serves as a coordination point for pyridoxal 5'-phosphate. The active-site Cysteine persulfide intermediate is the Cys-328. Cys-328 contacts [2Fe-2S] cluster.

The protein belongs to the class-V pyridoxal-phosphate-dependent aminotransferase family. NifS/IscS subfamily. Homodimer. Forms a heterotetramer with IscU, interacts with other sulfur acceptors. Pyridoxal 5'-phosphate is required as a cofactor.

The protein localises to the cytoplasm. It catalyses the reaction (sulfur carrier)-H + L-cysteine = (sulfur carrier)-SH + L-alanine. It participates in cofactor biosynthesis; iron-sulfur cluster biosynthesis. In terms of biological role, master enzyme that delivers sulfur to a number of partners involved in Fe-S cluster assembly, tRNA modification or cofactor biosynthesis. Catalyzes the removal of elemental sulfur atoms from cysteine to produce alanine. Functions as a sulfur delivery protein for Fe-S cluster synthesis onto IscU, an Fe-S scaffold assembly protein, as well as other S acceptor proteins. The protein is Cysteine desulfurase IscS of Proteus mirabilis (strain HI4320).